The primary structure comprises 349 residues: Holliday junction branch migration complex subunit RuvB (349 aa).

Positions 1-183 are large ATPase domain (RuvB-L); sequence MTDPSRLVTP…FGIPIRLNFY (183 aa). ATP-binding positions include leucine 22, arginine 23, glycine 64, lysine 67, threonine 68, threonine 69, 130–132, arginine 173, tyrosine 183, and arginine 220; that span reads EDF. Mg(2+) is bound at residue threonine 68. The interval 184 to 254 is small ATPAse domain (RuvB-S); sequence TIEELESIVT…IADHALGALE (71 aa). A head domain (RuvB-H) region spans residues 257–349; that stretch reads SAGLDAMDRR…GLFGDTGDQE (93 aa). Residues arginine 293, arginine 312, and arginine 317 each coordinate DNA.

It belongs to the RuvB family. As to quaternary structure, homohexamer. Forms an RuvA(8)-RuvB(12)-Holliday junction (HJ) complex. HJ DNA is sandwiched between 2 RuvA tetramers; dsDNA enters through RuvA and exits via RuvB. An RuvB hexamer assembles on each DNA strand where it exits the tetramer. Each RuvB hexamer is contacted by two RuvA subunits (via domain III) on 2 adjacent RuvB subunits; this complex drives branch migration. In the full resolvosome a probable DNA-RuvA(4)-RuvB(12)-RuvC(2) complex forms which resolves the HJ.

The protein localises to the cytoplasm. The enzyme catalyses ATP + H2O = ADP + phosphate + H(+). In terms of biological role, the RuvA-RuvB-RuvC complex processes Holliday junction (HJ) DNA during genetic recombination and DNA repair, while the RuvA-RuvB complex plays an important role in the rescue of blocked DNA replication forks via replication fork reversal (RFR). RuvA specifically binds to HJ cruciform DNA, conferring on it an open structure. The RuvB hexamer acts as an ATP-dependent pump, pulling dsDNA into and through the RuvAB complex. RuvB forms 2 homohexamers on either side of HJ DNA bound by 1 or 2 RuvA tetramers; 4 subunits per hexamer contact DNA at a time. Coordinated motions by a converter formed by DNA-disengaged RuvB subunits stimulates ATP hydrolysis and nucleotide exchange. Immobilization of the converter enables RuvB to convert the ATP-contained energy into a lever motion, pulling 2 nucleotides of DNA out of the RuvA tetramer per ATP hydrolyzed, thus driving DNA branch migration. The RuvB motors rotate together with the DNA substrate, which together with the progressing nucleotide cycle form the mechanistic basis for DNA recombination by continuous HJ branch migration. Branch migration allows RuvC to scan DNA until it finds its consensus sequence, where it cleaves and resolves cruciform DNA. This Rhodopseudomonas palustris (strain TIE-1) protein is Holliday junction branch migration complex subunit RuvB.